The chain runs to 663 residues: Ras and EF-hand domain-containing protein (663 aa).

EF-hand domains follow at residues 1 to 33 (MNHA…CREL) and 35 to 70 (VPAD…VSEA). 10 residues coordinate Ca(2+): D14, N16, S18, R20, D25, D48, D50, D52, Y54, and D59. The stretch at 122 to 297 (ELLLQQFEDL…LKKMVMEFQS (176 aa)) forms a coiled coil. Residues 324–336 (SQENASTKRQLSP) are compositionally biased toward polar residues. Residues 324-343 (SQENASTKRQLSPRNEVLPR) are disordered. Residues 477-482 (GSGKSS), 580-583 (NKVD), and 615-616 (AK) each bind GTP.

Belongs to the small GTPase superfamily. Rab family. Homodimer.

Its subcellular location is the cytoplasm. The protein resides in the perinuclear region. Binds predominantly GDP, and also GTP. The polypeptide is Ras and EF-hand domain-containing protein (rasef) (Danio rerio (Zebrafish)).